Here is a 150-residue protein sequence, read N- to C-terminus: Large ribosomal subunit protein bL9 (150 aa).

Belongs to the bacterial ribosomal protein bL9 family.

Functionally, binds to the 23S rRNA. The protein is Large ribosomal subunit protein bL9 of Desulforudis audaxviator (strain MP104C).